The chain runs to 123 residues: UPF0102 protein PSPPH_4120 (123 aa).

This sequence belongs to the UPF0102 family.

This is UPF0102 protein PSPPH_4120 from Pseudomonas savastanoi pv. phaseolicola (strain 1448A / Race 6) (Pseudomonas syringae pv. phaseolicola (strain 1448A / Race 6)).